Here is a 216-residue protein sequence, read N- to C-terminus: Thiamine-phosphate synthase (216 aa).

4-amino-2-methyl-5-(diphosphooxymethyl)pyrimidine is bound by residues Gln-41 to Lys-45 and Asp-77. Mg(2+) is bound by residues Asp-78 and Asp-97. Ser-116 serves as a coordination point for 4-amino-2-methyl-5-(diphosphooxymethyl)pyrimidine. Thr-143 to Ser-145 contributes to the 2-[(2R,5Z)-2-carboxy-4-methylthiazol-5(2H)-ylidene]ethyl phosphate binding site. Lys-146 contacts 4-amino-2-methyl-5-(diphosphooxymethyl)pyrimidine. 2-[(2R,5Z)-2-carboxy-4-methylthiazol-5(2H)-ylidene]ethyl phosphate contacts are provided by residues Gly-174 and Ile-194 to Ser-195.

This sequence belongs to the thiamine-phosphate synthase family. Mg(2+) serves as cofactor.

It catalyses the reaction 2-[(2R,5Z)-2-carboxy-4-methylthiazol-5(2H)-ylidene]ethyl phosphate + 4-amino-2-methyl-5-(diphosphooxymethyl)pyrimidine + 2 H(+) = thiamine phosphate + CO2 + diphosphate. It carries out the reaction 2-(2-carboxy-4-methylthiazol-5-yl)ethyl phosphate + 4-amino-2-methyl-5-(diphosphooxymethyl)pyrimidine + 2 H(+) = thiamine phosphate + CO2 + diphosphate. The enzyme catalyses 4-methyl-5-(2-phosphooxyethyl)-thiazole + 4-amino-2-methyl-5-(diphosphooxymethyl)pyrimidine + H(+) = thiamine phosphate + diphosphate. It participates in cofactor biosynthesis; thiamine diphosphate biosynthesis; thiamine phosphate from 4-amino-2-methyl-5-diphosphomethylpyrimidine and 4-methyl-5-(2-phosphoethyl)-thiazole: step 1/1. Its function is as follows. Condenses 4-methyl-5-(beta-hydroxyethyl)thiazole monophosphate (THZ-P) and 2-methyl-4-amino-5-hydroxymethyl pyrimidine pyrophosphate (HMP-PP) to form thiamine monophosphate (TMP). The chain is Thiamine-phosphate synthase from Pediococcus pentosaceus (strain ATCC 25745 / CCUG 21536 / LMG 10740 / 183-1w).